A 388-amino-acid polypeptide reads, in one-letter code: Sulfate adenylyltransferase (388 aa).

The protein belongs to the sulfate adenylyltransferase family.

The catalysed reaction is sulfate + ATP + H(+) = adenosine 5'-phosphosulfate + diphosphate. It participates in sulfur metabolism; hydrogen sulfide biosynthesis; sulfite from sulfate: step 1/3. The protein is Sulfate adenylyltransferase of Trichodesmium erythraeum (strain IMS101).